The sequence spans 460 residues: Muscarinic acetylcholine receptor M1 (460 aa).

Residues 1–22 (MNTSVPPAVSPNITVLAPGKGP) lie on the Extracellular side of the membrane. Residues N2 and N12 are each glycosylated (N-linked (GlcNAc...) asparagine). Residues 23 to 48 (WQVAFIGITTGLLSLATVTGNLLVLI) traverse the membrane as a helical segment. At 49 to 62 (SFKVNTELKTVNNY) the chain is on the cytoplasmic side. The helical transmembrane segment at 63-84 (FLLSLACADLIIGTFSMNLYTT) threads the bilayer. At 85–95 (YLLMGHWALGT) the chain is on the extracellular side. The chain crosses the membrane as a helical span at residues 96–121 (LACDLWLALDYVASNASVMNLLLISF). An intrachain disulfide couples C98 to C178. Topologically, residues 122 to 142 (DRYFSVTRPLSYRAKRTPRRA) are cytoplasmic. Residues 143-164 (ALMIGLAWLVSFVLWAPAILFW) form a helical membrane-spanning segment. Residues 165–185 (QYLVGERTVLAGQCYIQFLSQ) lie on the Extracellular side of the membrane. Residues 186 to 209 (PIITFGTAMAAFYLPVTVMCTLYW) form a helical membrane-spanning segment. Residues 210 to 366 (RIYRETENRA…LVKEKKAART (157 aa)) are Cytoplasmic-facing. Disordered regions lie at residues 225-257 (LQGSETPGKGGGSSSSSERSQPGAEGSPESPPG), 274-297 (WKEEEEEDEGSMESLTSSEGEEPG), and 310-351 (EAQA…QLAK). T230 is subject to Phosphothreonine. Low complexity predominate over residues 238–257 (SSSSERSQPGAEGSPESPPG). A Phosphoserine modification is found at S254. Residues 328-343 (RPTKKGRDRGGKGQKP) show a composition bias toward basic residues. The chain crosses the membrane as a helical span at residues 367-390 (LSAILLAFILTWTPYNIMVLVSTF). Residues 391 to 397 (CKDCVPE) lie on the Extracellular side of the membrane. The helical transmembrane segment at 398-420 (TLWELGYWLCYVNSTVNPMCYAL) threads the bilayer. Topologically, residues 421-460 (CNKAFRDTFRLLLLCRWDKRRWRKIPKRPGSVHRTPSRQC) are cytoplasmic. S451 carries the post-translational modification Phosphoserine. At T455 the chain carries Phosphothreonine. S457 carries the post-translational modification Phosphoserine.

This sequence belongs to the G-protein coupled receptor 1 family. Muscarinic acetylcholine receptor subfamily. CHRM1 sub-subfamily. As to quaternary structure, interacts with GPRASP2. Interacts with TMEM147.

It is found in the cell membrane. The protein localises to the postsynaptic cell membrane. In terms of biological role, the muscarinic acetylcholine receptor mediates various cellular responses, including inhibition of adenylate cyclase, breakdown of phosphoinositides and modulation of potassium channels through the action of G proteins. Primary transducing effect is Pi turnover. This chain is Muscarinic acetylcholine receptor M1 (Chrm1), found in Mus musculus (Mouse).